The primary structure comprises 1126 residues: Protein translocase subunit SecA (1126 aa).

ATP-binding positions include Q175, 193 to 197, and D694; that span reads GEGKT. Residues 1060-1126 form a disordered region; sequence VQEAAPEKHE…KYKNCHGQGL (67 aa). Over residues 1064 to 1080 the composition is skewed to basic and acidic residues; sequence APEKHEDMSRYRTEKTD. The Zn(2+) site is built by C1110, C1112, C1121, and H1122.

Belongs to the SecA family. As to quaternary structure, monomer and homodimer. Part of the essential Sec protein translocation apparatus which comprises SecA, SecYEG and auxiliary proteins SecDF. Other proteins may also be involved. Zn(2+) is required as a cofactor.

It is found in the cell inner membrane. The protein localises to the cytoplasm. It catalyses the reaction ATP + H2O + cellular proteinSide 1 = ADP + phosphate + cellular proteinSide 2.. In terms of biological role, part of the Sec protein translocase complex. Interacts with the SecYEG preprotein conducting channel. Has a central role in coupling the hydrolysis of ATP to the transfer of proteins into and across the cell membrane, serving as an ATP-driven molecular motor driving the stepwise translocation of polypeptide chains across the membrane. The polypeptide is Protein translocase subunit SecA (Parabacteroides distasonis (strain ATCC 8503 / DSM 20701 / CIP 104284 / JCM 5825 / NCTC 11152)).